A 235-amino-acid chain; its full sequence is Probable tetraspanin tspA (235 aa).

Over 1-18 (MVDTSNLLPQTPRLLKVP) the chain is Cytoplasmic. The helical transmembrane segment at 19–39 (LIILNIILWILGLVLVIVGGI) threads the bilayer. Over 40 to 68 (CVSFLSNFKDFTKASDAKSALSNLTTSIP) the chain is Extracellular. Asn62 is a glycosylation site (N-linked (GlcNAc...) asparagine). A helical membrane pass occupies residues 69–89 (AGVLVIGILFVIFTVVGCFVA). At 90-93 (YKEK) the chain is on the cytoplasmic side. Residues 94–114 (LVGLVIYCAVMLILLVILIGV) traverse the membrane as a helical segment. Residues 115–200 (GGKAITLHND…FSSKIYAVGA (86 aa)) are Extracellular-facing. Residues Asn139, Asn143, and Asn160 are each glycosylated (N-linked (GlcNAc...) asparagine). The chain crosses the membrane as a helical span at residues 201 to 221 (AGLAIGIIELVAILFSLFLII). The Cytoplasmic segment spans residues 222–235 (RICRSPRTRSYDQY).

This sequence belongs to the tetraspanin (TM4SF) family.

Its subcellular location is the membrane. In Dictyostelium discoideum (Social amoeba), this protein is Probable tetraspanin tspA (tspA).